We begin with the raw amino-acid sequence, 296 residues long: Protoheme IX farnesyltransferase (296 aa).

Residues 1–9 lie on the Cytoplasmic side of the membrane; sequence MMFKQYLQV. Residues 10 to 28 form a helical membrane-spanning segment; that stretch reads TKPGIIFGNLISVIGGFLL. The Periplasmic segment spans residues 29-37; it reads ASKGSIDYP. A helical membrane pass occupies residues 38–56; sequence LFIYTLVGVSLVVASGCVF. The Cytoplasmic portion of the chain corresponds to 57-78; sequence NNFIDRDIDRKMERTKNRVLVK. Residues 79–97 traverse the membrane as a helical segment; that stretch reads GLISPGVSLVYATLLGIAG. Topologically, residues 98 to 107 are periplasmic; the sequence is FMLLWFGANP. Residues 108-126 form a helical membrane-spanning segment; the sequence is LACWLGVMGFVVYVGIYSL. Residues 127–197 are Cytoplasmic-facing; the sequence is YMKRHSVYGT…YQAANIPVLP (71 aa). The chain crosses the membrane as a helical span at residues 198–216; that stretch reads VVKGISVAKNHITLYIIAF. At 217-228 the chain is on the periplasmic side; it reads AVATLMLTLGGY. The helical transmembrane segment at 229–247 threads the bilayer; sequence AGYKYLVVAAAVSVWWLGM. Residues 248–268 lie on the Cytoplasmic side of the membrane; sequence ALRGYKVEDDKVWARKLFGFS. Residues 269-287 form a helical membrane-spanning segment; that stretch reads IIAITALSIMMSVDFMVPN. Residues 288–296 lie on the Periplasmic side of the membrane; sequence SQSLLTYVW.

It belongs to the UbiA prenyltransferase family. Protoheme IX farnesyltransferase subfamily.

The protein resides in the cell inner membrane. It catalyses the reaction heme b + (2E,6E)-farnesyl diphosphate + H2O = Fe(II)-heme o + diphosphate. It participates in porphyrin-containing compound metabolism; heme O biosynthesis; heme O from protoheme: step 1/1. Its function is as follows. Converts heme B (protoheme IX) to heme O by substitution of the vinyl group on carbon 2 of heme B porphyrin ring with a hydroxyethyl farnesyl side group. The sequence is that of Protoheme IX farnesyltransferase from Salmonella arizonae (strain ATCC BAA-731 / CDC346-86 / RSK2980).